The sequence spans 262 residues: Thiazole synthase (262 aa).

The active-site Schiff-base intermediate with DXP is lysine 96. 1-deoxy-D-xylulose 5-phosphate is bound by residues glycine 157, 184-185 (AG), and 206-207 (NT).

Belongs to the ThiG family. In terms of assembly, homotetramer. Forms heterodimers with either ThiH or ThiS.

Its subcellular location is the cytoplasm. The enzyme catalyses [ThiS sulfur-carrier protein]-C-terminal-Gly-aminoethanethioate + 2-iminoacetate + 1-deoxy-D-xylulose 5-phosphate = [ThiS sulfur-carrier protein]-C-terminal Gly-Gly + 2-[(2R,5Z)-2-carboxy-4-methylthiazol-5(2H)-ylidene]ethyl phosphate + 2 H2O + H(+). The protein operates within cofactor biosynthesis; thiamine diphosphate biosynthesis. Functionally, catalyzes the rearrangement of 1-deoxy-D-xylulose 5-phosphate (DXP) to produce the thiazole phosphate moiety of thiamine. Sulfur is provided by the thiocarboxylate moiety of the carrier protein ThiS. In vitro, sulfur can be provided by H(2)S. The protein is Thiazole synthase of Legionella pneumophila (strain Lens).